Here is a 234-residue protein sequence, read N- to C-terminus: OVARIAN TUMOR DOMAIN-containing deubiquitinating enzyme 3 (234 aa).

An OTU domain is found at Y76–R234. The segment at V81–C87 is cys-loop. D84 is an active-site residue. C87 functions as the Nucleophile in the catalytic mechanism. The tract at residues I154 to S164 is variable-loop. Positions Y224–H229 are his-loop. Residue H229 is part of the active site.

The protein belongs to the peptidase C85 family.

The enzyme catalyses Thiol-dependent hydrolysis of ester, thioester, amide, peptide and isopeptide bonds formed by the C-terminal Gly of ubiquitin (a 76-residue protein attached to proteins as an intracellular targeting signal).. Functionally, hydrolase that can remove conjugated ubiquitin from proteins in vitro and may therefore play an important regulatory role at the level of protein turnover by preventing degradation. Cysteine protease with a preference for 'Lys-63' over 'Lys-48' over 'Met-1' -linked ubiquitin (UB) tetramers (e.g. Ub3 and Ub4) as substrates. Also cleaves RUB-GST fusion. This is OVARIAN TUMOR DOMAIN-containing deubiquitinating enzyme 3 from Arabidopsis thaliana (Mouse-ear cress).